We begin with the raw amino-acid sequence, 243 residues long: Histone H2B.2 (243 aa).

A2 bears the N,N,N-trimethylalanine; alternate mark. A2 is subject to N,N-dimethylalanine; alternate. At A2 the chain carries N-methylalanine; alternate. The interval P67–D145 is disordered. Residues G120 to Q132 are compositionally biased toward basic and acidic residues. Positions E133–K142 are enriched in basic residues.

This sequence belongs to the histone H2B family. In terms of assembly, the nucleosome is a histone octamer containing two molecules each of H2A, H2B, H3 and H4 assembled in one H3-H4 heterotetramer and two H2A-H2B heterodimers. The octamer wraps approximately 147 bp of DNA. In terms of processing, can be acetylated to form H2BK6ac.

The protein resides in the nucleus. The protein localises to the chromosome. In terms of biological role, core component of nucleosome. Nucleosomes wrap and compact DNA into chromatin, limiting DNA accessibility to the cellular machineries which require DNA as a template. Histones thereby play a central role in transcription regulation, DNA repair, DNA replication and chromosomal stability. DNA accessibility is regulated via a complex set of post-translational modifications of histones, also called histone code, and nucleosome remodeling. This chain is Histone H2B.2, found in Arabidopsis thaliana (Mouse-ear cress).